We begin with the raw amino-acid sequence, 366 residues long: Putative F-box protein At1g26515 (366 aa).

The segment at 1–20 is disordered; the sequence is MKTRSKKTKTENNQEKSKEK. Basic and acidic residues predominate over residues 8-20; it reads TKTENNQEKSKEK. Residues 20–66 form the F-box domain; the sequence is KNKFDQLPLDLEIEIFRRLPLKSVARFLTLSKSCAATIRSPSFITSF.

This chain is Putative F-box protein At1g26515, found in Arabidopsis thaliana (Mouse-ear cress).